We begin with the raw amino-acid sequence, 161 residues long: Large ribosomal subunit protein uL15 (161 aa).

Positions 1–43 are disordered; sequence MKLSEISDNPGARKKRMRIGRGIGSGKGKTGGRGGKGQTARSG. Over residues 21–37 the composition is skewed to gly residues; the sequence is RGIGSGKGKTGGRGGKG.

The protein belongs to the universal ribosomal protein uL15 family. As to quaternary structure, part of the 50S ribosomal subunit.

In terms of biological role, binds to the 23S rRNA. The chain is Large ribosomal subunit protein uL15 from Rhodopseudomonas palustris (strain HaA2).